The primary structure comprises 77 residues: Translation initiation factor IF-1, chloroplastic (77 aa).

The S1-like domain occupies 1–71; it reads MKEQKLIHEG…TRGRIIYRLR (71 aa).

This sequence belongs to the IF-1 family. As to quaternary structure, component of the 30S ribosomal translation pre-initiation complex which assembles on the 30S ribosome in the order IF-2 and IF-3, IF-1 and N-formylmethionyl-tRNA(fMet); mRNA recruitment can occur at any time during PIC assembly.

It localises to the plastid. The protein resides in the chloroplast. One of the essential components for the initiation of protein synthesis. Stabilizes the binding of IF-2 and IF-3 on the 30S subunit to which N-formylmethionyl-tRNA(fMet) subsequently binds. Helps modulate mRNA selection, yielding the 30S pre-initiation complex (PIC). Upon addition of the 50S ribosomal subunit IF-1, IF-2 and IF-3 are released leaving the mature 70S translation initiation complex. This Ceratophyllum demersum (Rigid hornwort) protein is Translation initiation factor IF-1, chloroplastic.